A 141-amino-acid polypeptide reads, in one-letter code: Nucleoside diphosphate kinase (141 aa).

ATP-binding residues include Lys11, Phe59, Arg87, Thr93, Arg104, and Asn114. The active-site Pros-phosphohistidine intermediate is His117.

Belongs to the NDK family. In terms of assembly, homotetramer. It depends on Mg(2+) as a cofactor.

Its subcellular location is the cytoplasm. The catalysed reaction is a 2'-deoxyribonucleoside 5'-diphosphate + ATP = a 2'-deoxyribonucleoside 5'-triphosphate + ADP. It carries out the reaction a ribonucleoside 5'-diphosphate + ATP = a ribonucleoside 5'-triphosphate + ADP. Functionally, major role in the synthesis of nucleoside triphosphates other than ATP. The ATP gamma phosphate is transferred to the NDP beta phosphate via a ping-pong mechanism, using a phosphorylated active-site intermediate. This Paracidovorax citrulli (strain AAC00-1) (Acidovorax citrulli) protein is Nucleoside diphosphate kinase.